The sequence spans 387 residues: UPF0400 protein C337.03 (387 aa).

In terms of domain architecture, CID spans Met1–Glu133. Residues Lys177–Ser255 adopt a coiled-coil conformation. A disordered region spans residues Thr257–Ser387. Positions Ser283–Pro297 are enriched in low complexity. Over residues Gln298–Asn323 the composition is skewed to polar residues. Acidic residues predominate over residues Asn353 to Asp365. Residues Asp370–Ser379 are compositionally biased toward low complexity. Residue Ser372 is modified to Phosphoserine.

This sequence belongs to the UPF0400 (RTT103) family.

The protein is UPF0400 protein C337.03 of Schizosaccharomyces pombe (strain 972 / ATCC 24843) (Fission yeast).